The sequence spans 341 residues: tRNA N6-adenosine threonylcarbamoyltransferase (341 aa).

Residues His-115 and His-119 each contribute to the Fe cation site. Substrate is bound by residues 138–142 (VVSGG), Asp-171, Gly-184, Asp-188, and Asn-279. Asp-307 provides a ligand contact to Fe cation.

It belongs to the KAE1 / TsaD family. Fe(2+) serves as cofactor.

It localises to the cytoplasm. It carries out the reaction L-threonylcarbamoyladenylate + adenosine(37) in tRNA = N(6)-L-threonylcarbamoyladenosine(37) in tRNA + AMP + H(+). Required for the formation of a threonylcarbamoyl group on adenosine at position 37 (t(6)A37) in tRNAs that read codons beginning with adenine. Is involved in the transfer of the threonylcarbamoyl moiety of threonylcarbamoyl-AMP (TC-AMP) to the N6 group of A37, together with TsaE and TsaB. TsaD likely plays a direct catalytic role in this reaction. The polypeptide is tRNA N6-adenosine threonylcarbamoyltransferase (Clostridium novyi (strain NT)).